A 341-amino-acid chain; its full sequence is Heat-inducible transcription repressor HrcA (341 aa).

It belongs to the HrcA family.

In terms of biological role, negative regulator of class I heat shock genes (grpE-dnaK-dnaJ and groELS operons). Prevents heat-shock induction of these operons. This Brevibacillus brevis (strain 47 / JCM 6285 / NBRC 100599) protein is Heat-inducible transcription repressor HrcA.